Reading from the N-terminus, the 739-residue chain is MSKQVFETVFAGKKLVVETGQVAKQANGAVVVRYGDSTVLTAAVMSKKMATGDFFPLQVNYEEKMYAAGKFPGGWMKREGRPSTDATLTARLIDRPIRPMFAEGFRNEVQVINTVLSYDPDASAPMAAMFGSSLALAISDIPFNGPIAGVQVGYVNGELIINPDQAQQEASLLELTVAGNKDAINMVESGAKELSEEVMLEALLKGHAAIQELLDFQNQIVAAVGKEKADVELLQVDPELQAEIVAAYNDDLKKAVQVEEKLAREDATNAVRETVIATYEEKYAEHEEFDRIMRDVHEILELMEHTEVRRLITEDKVRPDGRRVDEIRPLDAEVDFLPNVHGSGLFTRGQTQALSVLTLAPMGETQIIDGLDDEYKKRFLHHYNFPQYSVGSTGRYGAPGRREIGHGALGERALEQVLPSLEDFPYAIRLVAEVLESNGSSSQASITAGTLALMAGGVPIKAPVAGIAMGLISDGTNYTVLTDIQGLEDHFGDMDFKVAGTRDGITALQMDIKIDGITPQILEEALAQAKKARFEILDVIEATIPEVRPDLAPTAPKIDTIKIDVDKIKIVIGKGGETIDKIIAETGVKIDIDEDGLVAIFSPDRAAIERTKEIIAGLVREAKVDEVFQAKVVRLEKFGAFVNLFDKTDALVHVSEMAWTRVNKPEDLVEVGDVVDVKVIKIDDKGRIDASMKALLPKPEGYVEPEKRERSEKPRRHKEHKEKKDNNFGEFKFHKVDKK.

Residues Asp489 and Asp495 each coordinate Mg(2+). Residues 556 to 615 form the KH domain; that stretch reads PKIDTIKIDVDKIKIVIGKGGETIDKIIAETGVKIDIDEDGLVAIFSPDRAAIERTKEII. An S1 motif domain is found at 625–693; that stretch reads DEVFQAKVVR…DKGRIDASMK (69 aa). Residues 699–739 are disordered; the sequence is PEGYVEPEKRERSEKPRRHKEHKEKKDNNFGEFKFHKVDKK. Positions 722–739 are enriched in basic and acidic residues; sequence EKKDNNFGEFKFHKVDKK.

Belongs to the polyribonucleotide nucleotidyltransferase family. It depends on Mg(2+) as a cofactor.

The protein resides in the cytoplasm. The enzyme catalyses RNA(n+1) + phosphate = RNA(n) + a ribonucleoside 5'-diphosphate. In terms of biological role, involved in mRNA degradation. Catalyzes the phosphorolysis of single-stranded polyribonucleotides processively in the 3'- to 5'-direction. The sequence is that of Polyribonucleotide nucleotidyltransferase from Streptococcus suis (strain 98HAH33).